Here is a 152-residue protein sequence, read N- to C-terminus: UPF0178 protein YE1167 (152 aa).

Belongs to the UPF0178 family.

This is UPF0178 protein YE1167 from Yersinia enterocolitica serotype O:8 / biotype 1B (strain NCTC 13174 / 8081).